The primary structure comprises 138 residues: Nucleoside diphosphate kinase (138 aa).

The ATP site is built by K12, Y60, R88, T94, R105, and N115. Residue H118 is the Pros-phosphohistidine intermediate of the active site.

This sequence belongs to the NDK family. As to quaternary structure, homotetramer. Mg(2+) is required as a cofactor.

It is found in the cytoplasm. It carries out the reaction a 2'-deoxyribonucleoside 5'-diphosphate + ATP = a 2'-deoxyribonucleoside 5'-triphosphate + ADP. The enzyme catalyses a ribonucleoside 5'-diphosphate + ATP = a ribonucleoside 5'-triphosphate + ADP. In terms of biological role, major role in the synthesis of nucleoside triphosphates other than ATP. The ATP gamma phosphate is transferred to the NDP beta phosphate via a ping-pong mechanism, using a phosphorylated active-site intermediate. This Cutibacterium acnes (strain DSM 16379 / KPA171202) (Propionibacterium acnes) protein is Nucleoside diphosphate kinase.